The following is a 310-amino-acid chain: MSKASMLFSITVPGSTANLGPGFDSVGMALSRYLKLSVFDHDSWLFEAESDVVSGIPPGTDNLIYQTAKKVADHFGKTLPPVYVKVWSDIPLARGLGSSAAAIVAAIELANQLLELNMTDDQKLFFASEVEGHPDNAGASLFGGLLIGLHEEDKTHAVKVKHVDIDVVVVIPFYEVLTKDARDVLPEDFSYKHAVSASAVSNVLVAALMTQNWPLVGEMMNKDLFHQPYRTMLVPELSKVEHVASLKGAYGTALSGAGPTILTLIEKGKGEGLKKQLAQNFPHCEVDLLTVPVEGVVVEHDPVNQVKNVL.

Position 91–101 (91–101) interacts with ATP; that stretch reads PLARGLGSSAA.

This sequence belongs to the GHMP kinase family. Homoserine kinase subfamily.

The protein resides in the cytoplasm. It carries out the reaction L-homoserine + ATP = O-phospho-L-homoserine + ADP + H(+). It functions in the pathway amino-acid biosynthesis; L-threonine biosynthesis; L-threonine from L-aspartate: step 4/5. Functionally, catalyzes the ATP-dependent phosphorylation of L-homoserine to L-homoserine phosphate. The protein is Homoserine kinase of Bacillus pumilus (strain SAFR-032).